Consider the following 181-residue polypeptide: Adenylate kinase (181 aa).

10–15 provides a ligand contact to ATP; sequence GAGKGT. Residues 30-59 form an NMP region; the sequence is STGDLFRSNISEGTELGLQAKQYLDAGDLV. AMP-binding positions include threonine 31, arginine 36, 57–59, 85–88, and glutamine 92; these read DLV and GFPR. The interval 126-132 is LID; the sequence is GRGRADD. Residue arginine 127 coordinates ATP. AMP-binding residues include arginine 129 and arginine 140. Glycine 166 contacts ATP.

The protein belongs to the adenylate kinase family. In terms of assembly, monomer.

The protein resides in the cytoplasm. It carries out the reaction AMP + ATP = 2 ADP. It functions in the pathway purine metabolism; AMP biosynthesis via salvage pathway; AMP from ADP: step 1/1. Catalyzes the reversible transfer of the terminal phosphate group between ATP and AMP. Plays an important role in cellular energy homeostasis and in adenine nucleotide metabolism. In Mycobacteroides abscessus (strain ATCC 19977 / DSM 44196 / CCUG 20993 / CIP 104536 / JCM 13569 / NCTC 13031 / TMC 1543 / L948) (Mycobacterium abscessus), this protein is Adenylate kinase.